The sequence spans 231 residues: tRNA (guanine-N(7)-)-methyltransferase (231 aa).

The S-adenosyl-L-methionine site is built by aspartate 57, glutamate 82, aspartate 109, and aspartate 132. Aspartate 132 is a catalytic residue. Residues lysine 136, aspartate 168, and 205–208 (TKFE) each bind substrate. The disordered stretch occupies residues 194–214 (AFVPPPPPRPQTKFERRGLRK).

It belongs to the class I-like SAM-binding methyltransferase superfamily. TrmB family.

The enzyme catalyses guanosine(46) in tRNA + S-adenosyl-L-methionine = N(7)-methylguanosine(46) in tRNA + S-adenosyl-L-homocysteine. Its pathway is tRNA modification; N(7)-methylguanine-tRNA biosynthesis. In terms of biological role, catalyzes the formation of N(7)-methylguanine at position 46 (m7G46) in tRNA. This Halorhodospira halophila (strain DSM 244 / SL1) (Ectothiorhodospira halophila (strain DSM 244 / SL1)) protein is tRNA (guanine-N(7)-)-methyltransferase.